The following is a 204-amino-acid chain: LexA repressor (204 aa).

The segment at residues 31-51 (VREIGQAVGLKSSSTVHTHLV) is a DNA-binding region (H-T-H motif). Active-site for autocatalytic cleavage activity residues include Ser-128 and Lys-165.

Belongs to the peptidase S24 family. In terms of assembly, homodimer.

The enzyme catalyses Hydrolysis of Ala-|-Gly bond in repressor LexA.. Its function is as follows. Represses a number of genes involved in the response to DNA damage (SOS response), including recA and lexA. In the presence of single-stranded DNA, RecA interacts with LexA causing an autocatalytic cleavage which disrupts the DNA-binding part of LexA, leading to derepression of the SOS regulon and eventually DNA repair. The protein is LexA repressor of Syntrophomonas wolfei subsp. wolfei (strain DSM 2245B / Goettingen).